The chain runs to 161 residues: Leucine-rich colipase-like protein 1 (161 aa).

Residues 1–25 (MSVSVWPPLLLLLLLLLLWAVPTFQ) form the signal peptide.

The chain is Leucine-rich colipase-like protein 1 (Lrcol1) from Mus musculus (Mouse).